Reading from the N-terminus, the 3930-residue chain is Hybrid PKS-NRPS synthetase apdA (3930 aa).

In terms of domain architecture, Ketosynthase family 3 (KS3) spans 2–440 (QDLIAIVGSA…GTNAHAIIEG (439 aa)). Catalysis depends on for beta-ketoacyl synthase activity residues Cys176, His313, and His361. The tract at residues 557–879 (IFTGQGAQWA…MRRGDNEIEA (323 aa)) is malonyl-CoA:ACP transacylase (MAT) domain. Residues 948-1085 (HELLGRRVPD…GRLIINYGDP (138 aa)) form an N-terminal hotdog fold region. A dehydratase (DH) domain region spans residues 948–1251 (HELLGRRVPD…SMKSMSEPQP (304 aa)). One can recognise a PKS/mFAS DH domain in the interval 948–1252 (HELLGRRVPD…MKSMSEPQPE (305 aa)). Catalysis depends on His980, which acts as the Proton acceptor; for dehydratase activity. The tract at residues 1100-1252 (NVPVDMGRFY…MKSMSEPQPE (153 aa)) is C-terminal hotdog fold. Asp1159 (proton donor; for dehydratase activity) is an active-site residue. Residues 1389-1588 (QDDMLNRFYM…FSGLDCLAPD (200 aa)) form a methyltransferase (MT) domain region. The ketoreductase (KR) domain stretch occupies residues 2088-2229 (ATYLLAGMTG…SLASIIGNAA (142 aa)). The Carrier 1 domain maps to 2326 to 2403 (AVIPIVQEAF…QICEDAVRQF (78 aa)). O-(pantetheine 4'-phosphoryl)serine is present on Ser2363. Disordered stretches follow at residues 2414–2433 (VAPN…SNAT) and 2444–2494 (DAAN…VDAD). Residues 2445–2473 (AANGDYESSSQGDDSRGNSSSSSSHTSPS) show a composition bias toward low complexity. The segment at 2509–2937 (PASFAQSRLW…SLPVNQLPVT (429 aa)) is condensation (C) domain. The interval 2971-3371 (KSFPEETAIK…GTLIFMGRMD (401 aa)) is adenylation (A) (KR) domain. The reductase (RED) domain stretch occupies residues 2971 to 3371 (KSFPEETAIK…GTLIFMGRMD (401 aa)). In terms of domain architecture, Carrier 2 spans 3493–3572 (RHLSLAEGEL…QMARRISRRK (80 aa)). O-(pantetheine 4'-phosphoryl)serine is present on Ser3532.

This sequence in the C-terminal section; belongs to the NRP synthetase family.

It participates in secondary metabolite biosynthesis. Hybrid PKS-NRPS synthetase; part of the gene cluster that mediates the biosynthesis of aspyridones. The polyketide-amino acid backbone preaspyridone A is first assembled by the PKS-NRPS hybrid apdA. The assembly of preaspyridone A is initiated by loading of malonyl-CoA onto apdA, followed by decarboxylation to yield the acetyl starter unit. The growing polyketide chain then elongates into a tetraketide. The adpA PKS module catalyzes three Claisen condensations, as well as beta-keto processing and methylation. Alpha-methylation step during polyketide synthesis is a prerequisite and a key checkpoint for chain transfer between PKS and NRPS modules. The downstream NRPS module contains the condensation (C), adenylation (A), and thiolation (T) domains and catalyzes the incorporation of tyrosine via the formation of the L-tyrosinyl-thioester and the amide linkage between L-tyrosinyl-thioester and the tetraketide. The bimodular assembly line is terminated with a reductase (R) domain that facilitates formation and release of the tetramic acid product. Because apdA lacks a designated enoylreductase (ER) domain, the required activity is provided the enoyl reductase apdC. ApdC appears to operate with different stereoselectivity in different PKS cycle. Combined with apdC, apdA is proposed to synthesize preaspyridone A via about 20 enzymatic steps. A number of oxidative steps performed successively by the cytochrome P450 monooxygenases apdE and apdB are required for the conversion of preaspyridone A to aspyridone A. The cytochrome P450 monooxygenase apdE is responsible for the oxidative dephenylation of preaspyridone A. Finally, the predicted FAD-dependent monooxygenase apdD and the acyl-CoA dehydrogenase apdG may be involved in the transformation of aspyridone A into aspyridone B. The protein is Hybrid PKS-NRPS synthetase apdA of Emericella nidulans (strain FGSC A4 / ATCC 38163 / CBS 112.46 / NRRL 194 / M139) (Aspergillus nidulans).